A 221-amino-acid chain; its full sequence is Coiled-coil domain-containing protein 70 (221 aa).

A coiled-coil region spans residues 129 to 168 (NALWEKDRNLLQEDKALWEEEKALWVEERALLEEEKALWE).

The sequence is that of Coiled-coil domain-containing protein 70 (CCDC70) from Macaca fascicularis (Crab-eating macaque).